Consider the following 124-residue polypeptide: Fluoride-specific ion channel FluC (124 aa).

Transmembrane regions (helical) follow at residues 4–24 (VLLVALGGSIGAVFRYLISIF), 35–55 (FGTLVVNVIGSFFMGVIYALG), 60–80 (ISPELKALIGVGLLGALTTFS), and 95–115 (WLKAILNVVLNLSLCLFMVYL). Na(+)-binding residues include Gly74 and Thr77.

It belongs to the fluoride channel Fluc/FEX (TC 1.A.43) family.

Its subcellular location is the cell inner membrane. It catalyses the reaction fluoride(in) = fluoride(out). With respect to regulation, na(+) is not transported, but it plays an essential structural role and its presence is essential for fluoride channel function. Functionally, fluoride-specific ion channel. Important for reducing fluoride concentration in the cell, thus reducing its toxicity. The chain is Fluoride-specific ion channel FluC from Shewanella putrefaciens (strain CN-32 / ATCC BAA-453).